The chain runs to 425 residues: Oxalate decarboxylase ARB_02208 (425 aa).

Positions 1–19 (MKFGSALVAAVAAVAGVAA) are cleaved as a signal peptide. The Cupin type-1 1 domain maps to 73 to 236 (FSLSKTRMFH…FNISTGGTFD (164 aa)). 4 residues coordinate Mn(2+): histidine 116, histidine 118, glutamate 122, and histidine 161. 4 N-linked (GlcNAc...) asparagine glycosylation sites follow: asparagine 228, asparagine 247, asparagine 254, and asparagine 265. Residues 270 to 414 (FHIRDAPEIQ…AINVPIDVID (145 aa)) enclose the Cupin type-1 2 domain. Mn(2+) contacts are provided by histidine 317, histidine 319, glutamate 324, and histidine 363. The N-linked (GlcNAc...) asparagine glycan is linked to asparagine 367. Catalysis depends on glutamate 378, which acts as the Proton donor.

Mn(2+) serves as cofactor.

Its subcellular location is the secreted. It catalyses the reaction oxalate + H(+) = formate + CO2. Converts oxalate to formate and CO(2) in an O(2)-dependent reaction. Can also catalyze minor side reactions: oxalate oxidation to produce H(2)O(2), and oxalate-dependent, H(2)O(2)-independent dye oxidations. This chain is Oxalate decarboxylase ARB_02208, found in Arthroderma benhamiae (strain ATCC MYA-4681 / CBS 112371) (Trichophyton mentagrophytes).